The following is a 230-amino-acid chain: U2 small nuclear ribonucleoprotein A' (230 aa).

5 LRR repeats span residues 15–36 (SLRNNIFTNNSITKNMRLNADT), 48–69 (GDRELNLRGLQIPVIENLGVTE), 71–92 (HYTSLDLSDNEIRVMGGFPRLE), 93–114 (TLRTLLLSKNRITQINDVKNIA), and 115–136 (KLETLVLTQNGIATLGALESLK). The LRRCT domain maps to 149–187 (NPVQHVPRYRSYMISILPSLRMLDFQRVTQKERDEAEAM).

Belongs to the U2 small nuclear ribonucleoprotein A family. As to quaternary structure, associated with the spliceosome.

It localises to the nucleus. Involved in pre-mRNA splicing. The sequence is that of U2 small nuclear ribonucleoprotein A' (LEA1) from Yarrowia lipolytica (strain CLIB 122 / E 150) (Yeast).